Reading from the N-terminus, the 484-residue chain is Sperm motility kinase Tcr mutant form (484 aa).

In terms of domain architecture, Protein kinase spans 8 to 256 (YEMLETIGQG…VAEVMVHPWV (249 aa)). ATP contacts are provided by residues 14 to 22 (IGQGGCAQV) and lysine 37. Aspartate 127 functions as the Proton acceptor in the catalytic mechanism. Disordered stretches follow at residues 355–400 (EPTG…TMDQ) and 426–446 (STEG…RGWP). Residues 391-400 (PINTTPTMDQ) show a composition bias toward polar residues.

It belongs to the protein kinase superfamily. Tyr protein kinase family. Smok subfamily. In terms of tissue distribution, testis-specific. Expressed in the testis from 22 days postpartum (22 dpp). Expressed late in spermiogenesis, only in Tcr-containing t-haplotypes.

It carries out the reaction L-seryl-[protein] + ATP = O-phospho-L-seryl-[protein] + ADP + H(+). It catalyses the reaction L-threonyl-[protein] + ATP = O-phospho-L-threonyl-[protein] + ADP + H(+). While the main function of Smoks is to control sperm motility, the role of Smok-Tcr, with reduced kinase activity, is to counterbalance a signaling impairment caused by the distorter/sterility loci, giving t-sperm an advantage in reaching the oocytes. Transmission ratio distortion also called segregation distortion is the name given to the phenomenon above-mentioned. Being associated with the T-complex, it allows males heterozygous for a complete t-haplotype to preferentially transmit the t-haplotype chromosome. The chain is Sperm motility kinase Tcr mutant form (Smoktcr) from Mus musculus (Mouse).